Reading from the N-terminus, the 366-residue chain is MTIDQSQINFNVPSTYKLEEIVGEGAYGLVVAGTHLPSGTQVAIKRITPFDHTMFCQRTLREIKLLRHFHHENIISILDLIQPESYEVFNEVYLVQELMETDLHRVIRSQELSDDHCQYFVYQTLRGLKALHSADVLHRDLKPSNLLLNANCDLKICDFGLARSSAKPPPGTSDGGQGFMTEYVATRWYRAPEVMLSFQEYTKAIDLWSVGCILAEMINGKPLFPGRDYHHQLSLILQVLGTPTMDDFNEITSQRSKDYLRALEFTRRQDFSAICPKAKPAAVDLLKQTLTFSPSKRITVEEALMHSYVEAYHDPHDEPNAEPLKPGFFDFEFHQEKLSRDQWKRMIYDEVQDPVPTILSQWTESH.

The Protein kinase domain occupies Lys17–Glu302. ATP-binding positions include Val22 to Val30 and Lys45. The active-site Proton acceptor is the Asp140. Thr181 is subject to Phosphothreonine. Residues Thr181–Tyr183 carry the TXY motif. Tyr183 bears the Phosphotyrosine mark.

Belongs to the protein kinase superfamily. CMGC Ser/Thr protein kinase family. MAP kinase subfamily. Requires Mg(2+) as cofactor. Dually phosphorylated on Thr-181 and Tyr-183, which activates the enzyme.

It carries out the reaction L-seryl-[protein] + ATP = O-phospho-L-seryl-[protein] + ADP + H(+). The enzyme catalyses L-threonyl-[protein] + ATP = O-phospho-L-threonyl-[protein] + ADP + H(+). Its activity is regulated as follows. Activated by tyrosine and threonine phosphorylation. Functionally, responds to activation by environmental stress by phosphorylating downstream targets. This Cryptococcus neoformans var. neoformans serotype D (strain B-3501A) (Filobasidiella neoformans) protein is Mitogen-activated protein kinase CPK1 (CPK1).